The sequence spans 339 residues: Phosphate acyltransferase (339 aa).

This sequence belongs to the PlsX family. In terms of assembly, homodimer. Probably interacts with PlsY.

It localises to the cytoplasm. The catalysed reaction is a fatty acyl-[ACP] + phosphate = an acyl phosphate + holo-[ACP]. Its pathway is lipid metabolism; phospholipid metabolism. Catalyzes the reversible formation of acyl-phosphate (acyl-PO(4)) from acyl-[acyl-carrier-protein] (acyl-ACP). This enzyme utilizes acyl-ACP as fatty acyl donor, but not acyl-CoA. This is Phosphate acyltransferase from Brachyspira hyodysenteriae (strain ATCC 49526 / WA1).